Consider the following 282-residue polypeptide: Bifunctional protein FolD (282 aa).

NADP(+) contacts are provided by residues 164-166 (GRS) and serine 189.

This sequence belongs to the tetrahydrofolate dehydrogenase/cyclohydrolase family. Homodimer.

The catalysed reaction is (6R)-5,10-methylene-5,6,7,8-tetrahydrofolate + NADP(+) = (6R)-5,10-methenyltetrahydrofolate + NADPH. The enzyme catalyses (6R)-5,10-methenyltetrahydrofolate + H2O = (6R)-10-formyltetrahydrofolate + H(+). It functions in the pathway one-carbon metabolism; tetrahydrofolate interconversion. Its function is as follows. Catalyzes the oxidation of 5,10-methylenetetrahydrofolate to 5,10-methenyltetrahydrofolate and then the hydrolysis of 5,10-methenyltetrahydrofolate to 10-formyltetrahydrofolate. The polypeptide is Bifunctional protein FolD (Lactobacillus helveticus (strain DPC 4571)).